Consider the following 517-residue polypeptide: MSPLALVSVSDKKNIIQFCKELIENFNYKILSSGGTAKHLIEAKIPVIKVADFTNSQEILGGRVKTLHPKIHGGILAKRTDEEHQIDIKANDLELIDLVVVNLYPFKKTIDQGAKWEDAIENIDIGGPSMIRSAAKNHKYVSVLVDPSQYQNFLEESKKGELKESYKAKLALEAFQHTADYDTAISNWISKERGFQSSKHIKSYPLIKSLRYGENPHQKAFWYGLSNIGWNSAKQLQGKDLSYNNLLDLESALTTVLEFGYAEKDELTTDTFASIILKHNNPCGASVSNSASQAFLNALECDSVSAFGGIVAFNSNVDSETAIQLKDIFLECVVAPSFDEKALEILKVKKNLRILKLSKDQLPKNNQTSTKSIMGGLLVQDTDDNKEKSEGWISVTNKNPSNQMNLDLNFAWKICKHVKSNAIVIAKDQKTIGIGAGQMNRVGAAKIALKAAGKLCSGAVLASDGFFPFADTVELANEYGIKAIIQPGGSLRDQESIDMCNAKGIAMIFTQKRHFLH.

An MGS-like domain is found at 1 to 145; the sequence is MSPLALVSVS…KNHKYVSVLV (145 aa).

The protein belongs to the PurH family.

It catalyses the reaction (6R)-10-formyltetrahydrofolate + 5-amino-1-(5-phospho-beta-D-ribosyl)imidazole-4-carboxamide = 5-formamido-1-(5-phospho-D-ribosyl)imidazole-4-carboxamide + (6S)-5,6,7,8-tetrahydrofolate. It carries out the reaction IMP + H2O = 5-formamido-1-(5-phospho-D-ribosyl)imidazole-4-carboxamide. It participates in purine metabolism; IMP biosynthesis via de novo pathway; 5-formamido-1-(5-phospho-D-ribosyl)imidazole-4-carboxamide from 5-amino-1-(5-phospho-D-ribosyl)imidazole-4-carboxamide (10-formyl THF route): step 1/1. It functions in the pathway purine metabolism; IMP biosynthesis via de novo pathway; IMP from 5-formamido-1-(5-phospho-D-ribosyl)imidazole-4-carboxamide: step 1/1. The sequence is that of Bifunctional purine biosynthesis protein PurH from Prochlorococcus marinus (strain MIT 9215).